The sequence spans 401 residues: Probable tRNA sulfurtransferase (401 aa).

The THUMP domain maps to 60–165; sequence EALFPHLKQV…EEATFLTIRD (106 aa). ATP contacts are provided by residues 183-184, 208-209, R265, G287, and Q296; these read ML and HF.

It belongs to the ThiI family.

The protein localises to the cytoplasm. The enzyme catalyses [ThiI sulfur-carrier protein]-S-sulfanyl-L-cysteine + a uridine in tRNA + 2 reduced [2Fe-2S]-[ferredoxin] + ATP + H(+) = [ThiI sulfur-carrier protein]-L-cysteine + a 4-thiouridine in tRNA + 2 oxidized [2Fe-2S]-[ferredoxin] + AMP + diphosphate. It carries out the reaction [ThiS sulfur-carrier protein]-C-terminal Gly-Gly-AMP + S-sulfanyl-L-cysteinyl-[cysteine desulfurase] + AH2 = [ThiS sulfur-carrier protein]-C-terminal-Gly-aminoethanethioate + L-cysteinyl-[cysteine desulfurase] + A + AMP + 2 H(+). Its pathway is cofactor biosynthesis; thiamine diphosphate biosynthesis. Its function is as follows. Catalyzes the ATP-dependent transfer of a sulfur to tRNA to produce 4-thiouridine in position 8 of tRNAs, which functions as a near-UV photosensor. Also catalyzes the transfer of sulfur to the sulfur carrier protein ThiS, forming ThiS-thiocarboxylate. This is a step in the synthesis of thiazole, in the thiamine biosynthesis pathway. The sulfur is donated as persulfide by IscS. This is Probable tRNA sulfurtransferase from Bacillus subtilis (strain 168).